A 511-amino-acid chain; its full sequence is ATP synthase subunit alpha, plastid (511 aa).

An ATP-binding site is contributed by Gly-170 to Thr-177.

The protein belongs to the ATPase alpha/beta chains family. F-type ATPases have 2 components, CF(1) - the catalytic core - and CF(0) - the membrane proton channel. CF(1) has five subunits: alpha(3), beta(3), gamma(1), delta(1), epsilon(1). CF(0) has four main subunits: a, b, b' and c.

It is found in the plastid membrane. The catalysed reaction is ATP + H2O + 4 H(+)(in) = ADP + phosphate + 5 H(+)(out). In terms of biological role, produces ATP from ADP in the presence of a proton gradient across the membrane. The alpha chain is a regulatory subunit. This is ATP synthase subunit alpha, plastid from Cuscuta reflexa (Southern Asian dodder).